We begin with the raw amino-acid sequence, 459 residues long: Cysteine--tRNA ligase (459 aa).

Residue cysteine 29 coordinates Zn(2+). Residues 31–41 carry the 'HIGH' region motif; it reads MTVYDLCHLGH. Zn(2+) is bound by residues cysteine 213, histidine 238, and glutamate 242. The short motif at 270 to 274 is the 'KMSKS' region element; it reads KMSKS. Lysine 273 is an ATP binding site.

The protein belongs to the class-I aminoacyl-tRNA synthetase family. In terms of assembly, monomer. Requires Zn(2+) as cofactor.

Its subcellular location is the cytoplasm. It catalyses the reaction tRNA(Cys) + L-cysteine + ATP = L-cysteinyl-tRNA(Cys) + AMP + diphosphate. This chain is Cysteine--tRNA ligase, found in Variovorax paradoxus (strain S110).